The primary structure comprises 339 residues: Dihydroorotate dehydrogenase (quinone) (339 aa).

Residues 62–66 (AGLDK) and Thr86 contribute to the FMN site. Residue Lys66 participates in substrate binding. 111-115 (NRMGF) serves as a coordination point for substrate. Residues Asn139 and Asn172 each coordinate FMN. Position 172 (Asn172) interacts with substrate. The active-site Nucleophile is the Ser175. Residue Asn177 participates in substrate binding. 2 residues coordinate FMN: Lys217 and Thr245. 246 to 247 (NT) serves as a coordination point for substrate. FMN is bound by residues Gly268, Gly297, and 318-319 (YS).

The protein belongs to the dihydroorotate dehydrogenase family. Type 2 subfamily. Monomer. FMN serves as cofactor.

Its subcellular location is the cell membrane. The catalysed reaction is (S)-dihydroorotate + a quinone = orotate + a quinol. It functions in the pathway pyrimidine metabolism; UMP biosynthesis via de novo pathway; orotate from (S)-dihydroorotate (quinone route): step 1/1. Catalyzes the conversion of dihydroorotate to orotate with quinone as electron acceptor. The chain is Dihydroorotate dehydrogenase (quinone) from Shewanella amazonensis (strain ATCC BAA-1098 / SB2B).